The sequence spans 404 residues: N-acetylglucosamine-6-phosphate deacetylase (404 aa).

E143 is an a divalent metal cation binding site. 154-155 (AH) lines the substrate pocket. Positions 211 and 232 each coordinate a divalent metal cation. Residues 235–236 (NA), R243, and 269–272 (DGIH) each bind substrate. Catalysis depends on D294, which acts as the Proton donor/acceptor. 328 to 330 (LSG) contributes to the substrate binding site.

It belongs to the metallo-dependent hydrolases superfamily. NagA family. A divalent metal cation is required as a cofactor.

It carries out the reaction N-acetyl-D-glucosamine 6-phosphate + H2O = D-glucosamine 6-phosphate + acetate. It functions in the pathway amino-sugar metabolism; N-acetylneuraminate degradation. In terms of biological role, hydrolyzes the N-glycolyl group from N-glycolylglucosamine 6-phosphate (GlcNGc-6-P) in the N-glycolylneuraminic acid (Neu5Gc) degradation pathway. This is N-acetylglucosamine-6-phosphate deacetylase (amdhd2) from Danio rerio (Zebrafish).